A 190-amino-acid chain; its full sequence is Dynactin subunit 6 (190 aa).

At T186 the chain carries Phosphothreonine; by CDK1.

This sequence belongs to the dynactin subunits 5/6 family. Dynactin subunit 6 subfamily. As to quaternary structure, subunit of dynactin, a multiprotein complex part of a tripartite complex with dynein and a adapter, such as BICDL1, BICD2 or HOOK3. The dynactin complex is built around ACTR1A/ACTB filament and consists of an actin-related filament composed of a shoulder domain, a pointed end and a barbed end. Its length is defined by its flexible shoulder domain. The soulder is composed of 2 DCTN1 subunits, 4 DCTN2 and 2 DCTN3. The 4 DCNT2 (via N-terminus) bind the ACTR1A filament and act as molecular rulers to determine the length. The pointed end is important for binding dynein-dynactin cargo adapters. Consists of 4 subunits: ACTR10, DCNT4, DCTN5 and DCTN6. Within the complex DCTN6 forms a heterodimer with DCTN5. The barbed end is composed of a CAPZA1:CAPZB heterodimers, which binds ACTR1A/ACTB filament and dynactin and stabilizes dynactin. Interacts with PLK1. Interacts with N4BP2L1. Phosphorylation at Thr-186 by CDK1 during mitotic prometaphase creates a binding site for PLK1 that facilitates its recruitment to kinetochores. As to expression, ubiquitous.

It is found in the cytoplasm. The protein resides in the cytoskeleton. The protein localises to the chromosome. Its subcellular location is the centromere. It localises to the kinetochore. Part of the dynactin complex that activates the molecular motor dynein for ultra-processive transport along microtubules. This is Dynactin subunit 6 from Homo sapiens (Human).